Reading from the N-terminus, the 69-residue chain is uncharacterized protein (69 aa).

The segment at 48-69 is disordered; that stretch reads EADDVKPRKGRKPKAVSDADKD.

This is an uncharacterized protein from Salmonella phage P22 (Bacteriophage P22).